Consider the following 127-residue polypeptide: Large ribosomal subunit protein bL12 (127 aa).

Positions 98–127 (PKPIKEGAPKAEAESLKSKLEEAGAEVELK) are disordered.

The protein belongs to the bacterial ribosomal protein bL12 family. In terms of assembly, homodimer. Part of the ribosomal stalk of the 50S ribosomal subunit. Forms a multimeric L10(L12)X complex, where L10 forms an elongated spine to which 2 to 4 L12 dimers bind in a sequential fashion. Binds GTP-bound translation factors.

In terms of biological role, forms part of the ribosomal stalk which helps the ribosome interact with GTP-bound translation factors. Is thus essential for accurate translation. The protein is Large ribosomal subunit protein bL12 of Amoebophilus asiaticus (strain 5a2).